The primary structure comprises 546 residues: MEQRRVTDFFARRRPGPPRIAPPKLACRTPSPARPALRAPASATSGSRKRARPPAAPGRDQARPPARRRLRLSVDEVSSPSTPEAPDIPACPSPGQKIKKSTPAAGQPPHLTSAQDQDTISELASCLQRARELGARVRALKASAQDAGESCTPEAEGRPEEPCGEKAPAYQRFHALAQPGLPGLVLPYKYQVLAEMFRSMDTIVGMLHNRSETPTFAKVQRGVQDMMRRRFEECNVGQIKTVYPASYRFRQERSVPTFKDGTRRSDYQLTIEPLLEQEADGAAPQLTASRLLQRRQIFSQKLVEHVKEHHKAFLASLSPAMVVPEDQLTRWHPRFNVDEVPDIEPAALPQPPATEKLTTAQEVLARARNLISPRMEKALSQLALRSAAPSSPGSPRPALPATPPATPPAASPSALKGVSQDLLERIRAKEAQKQLAQMTRCPEQEQRLQRLERLPELARVLRSVFVSERKPALSMEVACARMVGSCCTIMSPGEMEKHLLLLSELLPDWLSLHRIRTDTYVKLDKAADLAHITARLAHQTRAEEGL.

The span at 1–11 shows a compositional bias: basic and acidic residues; that stretch reads MEQRRVTDFFA. The PIP-box K+4 motif motif lies at 1-23; that stretch reads MEQRRVTDFFARRRPGPPRIAPP. 2 disordered regions span residues 1 to 118 and 143 to 165; these read MEQR…QDQD and SAQDAGESCTPEAEGRPEEPCGE. The span at 28–45 shows a compositional bias: low complexity; it reads RTPSPARPALRAPASATS. T29 is modified (phosphothreonine; by MAPK8). Position 31 is a phosphoserine (S31). Residues 68–70 carry the Cyclin-binding motif motif; sequence RRL. S93 carries the post-translational modification Phosphoserine; by MAPK8. Residues 150-190 form an interaction with GMNN region; it reads SCTPEAEGRPEEPCGEKAPAYQRFHALAQPGLPGLVLPYKY. Positions 155-164 are enriched in basic and acidic residues; the sequence is AEGRPEEPCG. Phosphoserine; by MAPK8 is present on S318. Phosphoserine is present on residues S380 and S394. The disordered stretch occupies residues 383 to 415; it reads ALRSAAPSSPGSPRPALPATPPATPPAASPSAL. Residues 392–410 show a composition bias toward pro residues; it reads PGSPRPALPATPPATPPAA. The segment at 451 to 546 is interaction with LRWD1; sequence LERLPELARV…AHQTRAEEGL (96 aa).

The protein belongs to the Cdt1 family. Interacts with GMNN; the interaction inhibits binding of the MCM complex to origins of replication. Interacts with MCM6. Interacts with CDC6; are mutually dependent on one another for loading MCM complexes onto chromatin. Interacts with PCNA. Interacts with LRWD1 during G1 phase and during mitosis. Interacts with NDC80 subunit of the NDC80 complex; leading to kinetochore localization. Interacts with GRWD1; origin binding of GRWD1 is dependent on CDT1. Interacts with KAT7. Interacts with ubiquitin-binding protein FAF1; the interaction is likely to promote CDT1 degradation. Post-translationally, two independent E3 ubiquitin ligase complexes, SCF(SKP2) and the DCX(DTL) complex, mediated CDT1 degradation in S phase. Ubiquitinated by the DCX(DTL) complex, in response to DNA damage, leading to its degradation. Ubiquitination by the DCX(DTL) complex is necessary to ensure proper cell cycle regulation and is PCNA-dependent: interacts with PCNA via its PIP-box, while the presence of the containing the 'K+4' motif in the PIP box, recruit the DCX(DTL) complex, leading to its degradation. Phosphorylation at Thr-29 by CDK2 targets CDT1 for ubiquitination by SCF(SKP2) E3 ubiquitin ligase and subsequent degradation. The interaction with GMNN protects it against ubiquitination. Deubiquitinated by USP37. Ubiquitinated and degraded by the SCF(FBXO31) complex during the G2 phase to prevent re-replication. In terms of processing, phosphorylation by cyclin A-dependent kinases at Thr-29 targets CDT1 for ubiquitynation by SCF(SKP2) E3 ubiquitin ligase and subsequent degradation. Phosphorylated at Thr-29 by MAPK8/JNK1, which blocks replication licensing in response to stress. Binding to GMNN is not affected by phosphorylation.

The protein localises to the nucleus. It localises to the chromosome. Its subcellular location is the centromere. The protein resides in the kinetochore. Functionally, required for both DNA replication and mitosis. DNA replication licensing factor, required for pre-replication complex assembly. Cooperates with CDC6 and the origin recognition complex (ORC) during G1 phase of the cell cycle to promote the loading of the mini-chromosome maintenance (MCM) complex onto DNA to generate pre-replication complexes (pre-RC). Required also for mitosis by promoting stable kinetochore-microtubule attachments. Potential oncogene. This chain is DNA replication factor Cdt1, found in Homo sapiens (Human).